The following is a 356-amino-acid chain: Protein RecA (356 aa).

75–82 (GPESSGKT) is an ATP binding site.

This sequence belongs to the RecA family.

The protein resides in the cytoplasm. Its function is as follows. Can catalyze the hydrolysis of ATP in the presence of single-stranded DNA, the ATP-dependent uptake of single-stranded DNA by duplex DNA, and the ATP-dependent hybridization of homologous single-stranded DNAs. It interacts with LexA causing its activation and leading to its autocatalytic cleavage. This is Protein RecA from Burkholderia mallei (strain ATCC 23344).